Consider the following 950-residue polypeptide: Oxysterol-binding protein-related protein 1 (950 aa).

An interaction with RAB7A region spans residues 1-237; it reads MNTEAEQQLL…NKVIYKALKR (237 aa). ANK repeat units follow at residues 47 to 76, 80 to 109, and 175 to 204; these read LGWTPLHLACYFGHRQVVQDLLKAGAEVNV, MGDTPLHRAAFTGRKELVMLLLEYNADTTI, and LGNTPLHCAAYRAHKQCALKLLRSGADPNL. Residues 235 to 334 form the PH domain; sequence LKRYEGPLWK…WLEAIEEHSA (100 aa). Residues 430–463 are a coiled coil; it reads NFKLEQEQEKNKILSEALETLATEHHELEQSLVK. The FFAT motif lies at 469–485; that stretch reads SILSEDEFYDALSDSES. Ser499 is subject to Phosphoserine. Residues 501–521 are compositionally biased toward basic and acidic residues; that stretch reads EEEGEHLGSRKHRMSEEKDCG. Disordered stretches follow at residues 501-527, 795-816, and 881-913; these read EEEGEHLGSRKHRMSEEKDCGGGDALS, KKNTEEKKNSKQMSTSEELDEM, and MENGEIDQASEEKKRLEEKQRAARKNRSKSEED. A coiled-coil region spans residues 877–913; the sequence is DIRAMENGEIDQASEEKKRLEEKQRAARKNRSKSEED. Basic and acidic residues predominate over residues 890 to 901; that stretch reads SEEKKRLEEKQR.

It belongs to the OSBP family. In terms of assembly, interacts (via FFAT motif) with VAPA and VAPB. Interacts with the GTP-bound form of RAB7A. Interacts with OAS1B. Interacts (via FFAT motif) with MOSPD2 (via MSP domain).

The protein localises to the late endosome. Functionally, binds phospholipids; exhibits strong binding to phosphatidic acid and weak binding to phosphatidylinositol 3-phosphate. Stabilizes GTP-bound RAB7A on late endosomes/lysosomes and alters functional properties of late endocytic compartments via its interaction with RAB7A. Binds 25-hydroxycholesterol and cholesterol. This Homo sapiens (Human) protein is Oxysterol-binding protein-related protein 1.